We begin with the raw amino-acid sequence, 242 residues long: Probable ergothioneine transport ATP-binding protein EgtUA (242 aa).

An ABC transporter domain is found at 2-236; that stretch reads IEYKNVALRY…PATDFVADLF (235 aa). 34-41 contributes to the ATP binding site; sequence GPSGSGKT.

Belongs to the ABC transporter superfamily. As to quaternary structure, the complex is probably composed of at least an ATP-binding protein (EgtUA) and a transmembrane protein (EgtUBC).

It is found in the cell inner membrane. The catalysed reaction is ergothioneine(out) + ATP + H2O = ergothioneine(in) + ADP + phosphate + H(+). Functionally, part of an ABC transporter complex EgtU required for the uptake of ergothioneine (EGT), a natural low-molecular weight (LMW) thiol antioxidant. Probably responsible for energy coupling to the transport system. The polypeptide is Probable ergothioneine transport ATP-binding protein EgtUA (Streptococcus pneumoniae serotype 2 (strain D39 / NCTC 7466)).